The primary structure comprises 559 residues: MRKFAYCKVVLATSLVWVLLDMFLLLYFSECNKCEEKKERGLPAGDVLELVQKPHEGPGEMGKPVVIPKEDQEKMKEMFKINQFNLMASEMIAFNRSLPDVRLEGCKTKVYPDSLPTTSVVIVFHNEAWSTLLRTVHSVINRSPRHMIEEIVLVDDASERDFLKRPLESYVKKLKVPVHVIRMEQRSGLIRARLKGAAVSKGQVITFLDAHCECTVGWLEPLLARIKHDRRTVVCPIIDVISDDTFEYMAGSDMTYGGFNWKLNFRWYPVPQREMDRRKGDRTLPVRTPTMAGGLFSIDRDYFQEIGTYDAGMDIWGGENLEISFRIWQCGGTLEIVTCSHVGHVFRKATPYTFPGGTGQIINKNNRRLAEVWMDEFKNFFYIISPGVTKVDYGDISSRVGLRHKLQCKPFSWYLENIYPDSQIPRHYFSLGEIRNVETNQCLDNMARKENEKVGIFNCHGMGGNQVFSYTANKEIRTDDLCLDVSKLNGPVTMLKCHHLKGNQLWEYDPVKLTLQHVNSNQCLDKATEEDSQVPSIRDCTGSRSQQWLLRNVTLPEIF.

The Cytoplasmic segment spans residues 1 to 8 (MRKFAYCK). The helical; Signal-anchor for type II membrane protein transmembrane segment at 9-28 (VVLATSLVWVLLDMFLLLYF) threads the bilayer. At 29 to 559 (SECNKCEEKK…LRNVTLPEIF (531 aa)) the chain is on the lumenal side. Asparagine 95 is a glycosylation site (N-linked (GlcNAc...) asparagine). 5 cysteine pairs are disulfide-bonded: cysteine 106–cysteine 339, cysteine 330–cysteine 408, cysteine 442–cysteine 459, cysteine 482–cysteine 497, and cysteine 523–cysteine 540. Residues 115–225 (LPTTSVVIVF…VGWLEPLLAR (111 aa)) are catalytic subdomain A. Substrate is bound by residues aspartate 156 and arginine 186. Residues aspartate 209 and histidine 211 each contribute to the Mn(2+) site. The segment at 285–347 (PVRTPTMAGG…TCSHVGHVFR (63 aa)) is catalytic subdomain B. Tryptophan 316 contacts substrate. Histidine 344 is a Mn(2+) binding site. Substrate contacts are provided by arginine 347 and tyrosine 352. Residues 429–551 (FSLGEIRNVE…GSRSQQWLLR (123 aa)) enclose the Ricin B-type lectin domain. An N-linked (GlcNAc...) asparagine glycan is attached at asparagine 552.

Belongs to the glycosyltransferase 2 family. GalNAc-T subfamily. The cofactor is Mn(2+). In terms of tissue distribution, heart, brain, spleen, liver, skeletal muscle and kidney.

The protein resides in the golgi apparatus. It is found in the golgi stack membrane. The protein localises to the secreted. It catalyses the reaction L-seryl-[protein] + UDP-N-acetyl-alpha-D-galactosamine = a 3-O-[N-acetyl-alpha-D-galactosaminyl]-L-seryl-[protein] + UDP + H(+). The enzyme catalyses L-threonyl-[protein] + UDP-N-acetyl-alpha-D-galactosamine = a 3-O-[N-acetyl-alpha-D-galactosaminyl]-L-threonyl-[protein] + UDP + H(+). Its pathway is protein modification; protein glycosylation. Functionally, catalyzes the initial reaction in O-linked oligosaccharide biosynthesis, the transfer of an N-acetyl-D-galactosamine residue to a serine or threonine residue on the protein receptor. Has a broad spectrum of substrates such as apomucin-, MUC5AC-, MUC1- and MUC2-derived peptides. The sequence is that of Polypeptide N-acetylgalactosaminyltransferase 1 from Rattus norvegicus (Rat).